The sequence spans 242 residues: DNA-directed RNA polymerase III subunit rpc5 (242 aa).

2 disordered regions span residues 1 to 22 and 153 to 172; these read MSFS…TEEQ and LKAA…PRGP. Over residues 155–172 the composition is skewed to low complexity; it reads AAAGPSNSSSGTSTPRGP.

Component of the RNA polymerase III (Pol III) complex consisting of 17 subunits.

The protein resides in the cytoplasm. It is found in the nucleus. In terms of biological role, DNA-dependent RNA polymerase catalyzes the transcription of DNA into RNA using the four ribonucleoside triphosphates as substrates. Specific peripheric component of RNA polymerase III which synthesizes small RNAs, such as 5S rRNA and tRNAs. The RPC53/RPC4-RPC37/RPC5 subcomplex is required for terminator recognition and reinitiation. This Schizosaccharomyces pombe (strain 972 / ATCC 24843) (Fission yeast) protein is DNA-directed RNA polymerase III subunit rpc5 (rpc37).